We begin with the raw amino-acid sequence, 799 residues long: MQAKTTSEEYVIPNFAQTINNRTIVNIFESCKYRSPLIICALNDAVLAKEYSNSMAMGSGTITFMIDNDVDIMSSLYTTFRTVSTLLLMGNQLCVFIVVPMSVISTDALTAIAYAYRGAMIELRHYGRGDDYVQERLESLFKLSPLCGTPHMGPKYYGPTVFSELLDLSHHNKTSWYSVIDYSMFTRTALVGFASYMMKTLSLNSSIVNIVGYNPPYVWAAMMHGVTIRYIEKEIPNPKGKGPMGLIMPELNGRVLTNKVKYVLHNPQIKLLCLDSMMFMSSRNIVYIGAYPATHLLDMNLRGWNIYAVDPEITQQWISDMKAKTGANICASSRKFMFDVSENIKINEFFGNQPYSIIDDSWVPDNYEQFQDKKRNYFQELVKSDQKVTLITMKWNTRKNVTCEKLLALLPQPYGGKLYEMRAFFHRNGIGSITIDANSVEKYIQKFQELPLGAQVGTQKFMHTMISRVQDVMSIQPKKGDVIIASYSLSNASNPKKKVLEYLTKASKSEAMIIFGAPNLERVKYMRERGVLPGNNITINGEKITFNNPSGKKWTDFGYTNSELLACDMIEVTIEQMVSFMSTSFRGTGYYSNSIYNDLFSWFIPIWVWNQTMQIQDIRLSPVALVKCFTTKIRNLCYVPHSTYYALRGHLVAKMFSENNIENNCYSISGKSNETFTVLKDFKFPTSIGVLEFKAGEKVNISGHLLSLAVAAHFVAVPVTMWARHIKYMTVDRQKPPDVDRILFFDNKIKRNTLEKWHTKSEVILAALIAGEYVGLMLNNFHSKAIVDDLCNTVLATFR.

It belongs to the phytoreovirus protein P5 family.

It localises to the virion. Its subcellular location is the host cytoplasm. It catalyses the reaction a 5'-end diphospho-ribonucleoside in mRNA + GTP + H(+) = a 5'-end (5'-triphosphoguanosine)-ribonucleoside in mRNA + diphosphate. It participates in mRNA processing; mRNA capping. Its function is as follows. Enzyme involved in mRNA capping (Potential). Binds to GTP and might have guanylyltransferase activity. Together with the RNA-directed RNA polymerase P1 and protein P7, forms an transcriptional complex positioned near the channels situated at each of the five-fold vertices of the core. The polypeptide is Putative mRNA-capping enzyme P5 (Nephotettix cincticeps (Green rice leafhopper)).